The sequence spans 240 residues: Ribosomal RNA small subunit methyltransferase G (240 aa).

S-adenosyl-L-methionine is bound by residues G78, F83, 129–130 (AE), and R147. The tract at residues 218–240 (RRQTSKKYPRKPGTPNKSPLLEN) is disordered.

Belongs to the methyltransferase superfamily. RNA methyltransferase RsmG family.

It is found in the cytoplasm. In terms of biological role, specifically methylates the N7 position of guanine in position 535 of 16S rRNA. This is Ribosomal RNA small subunit methyltransferase G from Staphylococcus haemolyticus (strain JCSC1435).